The following is a 264-amino-acid chain: Phosphonates import ATP-binding protein PhnC (264 aa).

The ABC transporter domain occupies 8-255 (LQAENLRMTF…KLIEIYGPEF (248 aa)). 40–47 (GPSGSGKS) lines the ATP pocket.

It belongs to the ABC transporter superfamily. Phosphonates importer (TC 3.A.1.9.1) family. The complex is composed of two ATP-binding proteins (PhnC), two transmembrane proteins (PhnE) and a solute-binding protein (PhnD).

The protein resides in the cell inner membrane. The catalysed reaction is phosphonate(out) + ATP + H2O = phosphonate(in) + ADP + phosphate + H(+). Part of the ABC transporter complex PhnCDE involved in phosphonates import. Responsible for energy coupling to the transport system. The polypeptide is Phosphonates import ATP-binding protein PhnC (Maricaulis maris (strain MCS10) (Caulobacter maris)).